A 212-amino-acid chain; its full sequence is Large ribosomal subunit protein bL25 (212 aa).

Residues 190 to 212 are disordered; sequence IAEAGDALAEPEVISKGSGEADE.

This sequence belongs to the bacterial ribosomal protein bL25 family. CTC subfamily. Part of the 50S ribosomal subunit; part of the 5S rRNA/L5/L18/L25 subcomplex. Contacts the 5S rRNA. Binds to the 5S rRNA independently of L5 and L18.

Its function is as follows. This is one of the proteins that binds to the 5S RNA in the ribosome where it forms part of the central protuberance. The protein is Large ribosomal subunit protein bL25 of Rhodopirellula baltica (strain DSM 10527 / NCIMB 13988 / SH1).